The primary structure comprises 86 residues: Polcalcin Nic t 2 (86 aa).

2 EF-hand domains span residues 8–42 (QDIA…TLGS) and 43–78 (VTPE…NRGL). 9 residues coordinate Ca(2+): Asp-21, Asn-23, Asp-25, Gln-27, Glu-32, Asp-56, Asn-58, Asp-60, and Glu-67.

The chain is Polcalcin Nic t 2 (Nict2) from Nicotiana tabacum (Common tobacco).